The primary structure comprises 109 residues: MAASLLLRQGRAGALKTVLLEAGVFRGVAPAVSLSAESGKNEKGLPPNPKKQSPPKKPVSAAPTEPFDNTTYKNLQHHDYSTYTFLDLNLDLSKFRMPQPSSGRESPRH.

The N-terminal 34 residues, 1–34, are a transit peptide targeting the mitochondrion; sequence MAASLLLRQGRAGALKTVLLEAGVFRGVAPAVSL. A disordered region spans residues 33–72; that stretch reads SLSAESGKNEKGLPPNPKKQSPPKKPVSAAPTEPFDNTTY. Ser-106 carries the post-translational modification Phosphoserine.

Belongs to the complex I NDUFV3 subunit family. Complex I is composed of 45 different subunits. This is a component of the flavoprotein-sulfur (FP) fragment of the enzyme.

The protein resides in the mitochondrion inner membrane. Accessory subunit of the mitochondrial membrane respiratory chain NADH dehydrogenase (Complex I), that is believed not to be involved in catalysis. Complex I functions in the transfer of electrons from NADH to the respiratory chain. The immediate electron acceptor for the enzyme is believed to be ubiquinone. May be the terminally assembled subunit of Complex I. In Bos taurus (Bovine), this protein is NADH dehydrogenase [ubiquinone] flavoprotein 3, mitochondrial (NDUFV3).